Consider the following 341-residue polypeptide: Mitochondrial transcription factor 1 (341 aa).

Residues Leu-23, Glu-77, Asp-101, and Asn-137 each coordinate S-adenosyl-L-methionine.

Belongs to the class I-like SAM-binding methyltransferase superfamily. rRNA adenine N(6)-methyltransferase family.

It is found in the mitochondrion. Mitochondrial transcription factor that confers selective promoter recognition on the core subunit of the yeast mitochondrial RNA polymerase. Interacts with DNA in a non-specific manner. The sequence is that of Mitochondrial transcription factor 1 (MTF1) from Saccharomyces paradoxus (Yeast).